Reading from the N-terminus, the 215-residue chain is MQRGKFITVEGIDGAGKSTHLAWLERFLQDKGLEVVVTREPGGTALGEALRQLLLDHRQAMHPETEALLMFAARREHLDKVILPALDRGAWVVSDRFTDASFAYQGGGRGVAQSKLDNLEQWVQAELSPDLTVYFDVPVIVGRERLQSTRVADRFEMESNLFFERVRQAYLQRAEQFPQRIRVVDGSRLLAEVKTAVAEIVEDFWSDLSDTQFRG.

Position 11-18 (11-18) interacts with ATP; the sequence is GIDGAGKS.

The protein belongs to the thymidylate kinase family.

It carries out the reaction dTMP + ATP = dTDP + ADP. Phosphorylation of dTMP to form dTDP in both de novo and salvage pathways of dTTP synthesis. In Nitrosomonas europaea (strain ATCC 19718 / CIP 103999 / KCTC 2705 / NBRC 14298), this protein is Thymidylate kinase.